Consider the following 313-residue polypeptide: Protoheme IX farnesyltransferase (313 aa).

Helical transmembrane passes span 32–52 (VMSL…GDFH), 53–73 (PVLA…AGAL), 120–140 (VLVN…YVVI), 153–173 (IVIG…AVTG), 180–200 (LLLF…LALF), 226–246 (ILLY…LGYF), 248–268 (AVYG…AIRV), and 284–304 (LFKF…IEVV).

The protein belongs to the UbiA prenyltransferase family. Protoheme IX farnesyltransferase subfamily.

It localises to the cell inner membrane. The catalysed reaction is heme b + (2E,6E)-farnesyl diphosphate + H2O = Fe(II)-heme o + diphosphate. It functions in the pathway porphyrin-containing compound metabolism; heme O biosynthesis; heme O from protoheme: step 1/1. Functionally, converts heme B (protoheme IX) to heme O by substitution of the vinyl group on carbon 2 of heme B porphyrin ring with a hydroxyethyl farnesyl side group. The polypeptide is Protoheme IX farnesyltransferase (Rhodopseudomonas palustris (strain BisB5)).